The primary structure comprises 224 residues: MEYNRQPCPIRIVEDCGCAFMMGTMGGSLFQYLKGFRNAPSGLRRGLHGGIESVRLRTPAIAGSFAIWGATFSTVDCVMVSYRQREDSWNAIVSGAATGGILAARNGIRAMANSAFVGCLVLAMLEGAGAAVATIYASDGGVKAEESLITVDQQMQRPQWETSVADSNLTGAELERVLDECRAYRAHNKMQQPMRSDAVEGKELGQLMKPMHSLVDLVKLAEIV.

3 helical membrane passes run 16-36, 60-80, and 115-135; these read CGCA…LKGF, AIAG…CVMV, and AFVG…VATI.

Belongs to the Tim17/Tim22/Tim23 family. In terms of assembly, component of the TIM23 complex at least composed of Tim23, Tim17 (Tim17a1, Tim17a2 or Tim17b1) and a Tim50. The complex interacts with the Tim44 component of the PAM complex.

The protein localises to the mitochondrion inner membrane. In terms of biological role, essential component of the TIM23 complex, a complex that mediates the translocation of transit peptide-containing proteins across the mitochondrial inner membrane. The protein is Probable mitochondrial import inner membrane translocase subunit Tim17 4 (Tim17a2) of Drosophila melanogaster (Fruit fly).